Consider the following 128-residue polypeptide: Sulfurtransferase TusD (128 aa).

C78 functions as the Cysteine persulfide intermediate in the catalytic mechanism.

It belongs to the DsrE/TusD family. In terms of assembly, heterohexamer, formed by a dimer of trimers. The hexameric TusBCD complex contains 2 copies each of TusB, TusC and TusD. The TusBCD complex interacts with TusE.

It is found in the cytoplasm. Its function is as follows. Part of a sulfur-relay system required for 2-thiolation of 5-methylaminomethyl-2-thiouridine (mnm(5)s(2)U) at tRNA wobble positions. Accepts sulfur from TusA and transfers it in turn to TusE. The chain is Sulfurtransferase TusD from Cronobacter sakazakii (strain ATCC BAA-894) (Enterobacter sakazakii).